The following is a 121-amino-acid chain: Large ribosomal subunit protein uL14 (121 aa).

It belongs to the universal ribosomal protein uL14 family. As to quaternary structure, part of the 50S ribosomal subunit. Forms a cluster with proteins L3 and L19. In the 70S ribosome, L14 and L19 interact and together make contacts with the 16S rRNA in bridges B5 and B8.

Binds to 23S rRNA. Forms part of two intersubunit bridges in the 70S ribosome. This chain is Large ribosomal subunit protein uL14, found in Synechococcus sp. (strain CC9902).